The chain runs to 509 residues: Probable xyloglucan galactosyltransferase GT12 (509 aa).

The Cytoplasmic segment spans residues 1-3; sequence MMK. A helical; Signal-anchor for type II membrane protein membrane pass occupies residues 4–24; that stretch reads PVPKLWVVISSAFVFCLLVLF. Topologically, residues 25–509 are lumenal; sequence QINKSDLIEA…KLEIIHEKTA (485 aa). Residues asparagine 27, asparagine 59, asparagine 65, asparagine 169, asparagine 170, asparagine 195, asparagine 257, and asparagine 416 are each glycosylated (N-linked (GlcNAc...) asparagine).

The protein belongs to the glycosyltransferase 47 family. In terms of tissue distribution, expressed in pollen grains.

It localises to the golgi apparatus membrane. Its function is as follows. Functions in xyloglucan synthesis by adding side chains to the xylosylated glucan backbone. Involved in the galactosylation of hemicellulose xyloglucan. In Arabidopsis thaliana (Mouse-ear cress), this protein is Probable xyloglucan galactosyltransferase GT12.